A 539-amino-acid chain; its full sequence is MLRKGICRLIHQVSESSKKPYFLTTPIFYVNAAPHLGHLYSLVLTDAIARFQNLKPDVSVISSTGTDEHGLKVQTVAQTEGVSPLQLCDRNSKRFADLAVAANTKFTHFIRTTNPKHQASVQEFWKTIQKAGMISFERHEGWYCVSDETFYPESAIQKVVDPATKQEKRVSMETGKEVQWSSEMNYHFLLSKFQSRLIEHYNKNPNFVQPSIFHTQVLEELKTGISDLSISRPKQRLSWGIPVPGNSQQTIYVWLDALINYISVIGYPWLNEKSSLSAGWPANMHVIGKDIIRFHCIYWPAFLMAAGLPLPEKILVHSHWTMNKVKMSKSLGNVVDPFWLIEKYGVDTIRYYLLKRGRLTSDSNFDIEELEKDEEHDLRRSLGVLLSRLQSKKLFISNEIQKQWHKKDDFTEYEDIVHELIELPVVCAQSIDGGCVYEVINLVQSVLRRVTKLFQLKEPWKLSDDSQEKIDTLMLVAHSLRISGILLQPIMPTKSTELLDQLGIPKNQRSLQNATNVFEPTEFTFHSGNNSHLFDKRTQ.

The 'HIGH' region motif lies at 28-38 (FYVNAAPHLGH). The 'KMSKS' region motif lies at 326-330 (KMSKS). ATP is bound at residue Lys329.

The protein belongs to the class-I aminoacyl-tRNA synthetase family.

Its subcellular location is the mitochondrion matrix. The catalysed reaction is tRNA(Met) + L-methionine + ATP = L-methionyl-tRNA(Met) + AMP + diphosphate. The polypeptide is Probable methionine--tRNA ligase, mitochondrial (Schizosaccharomyces pombe (strain 972 / ATCC 24843) (Fission yeast)).